The primary structure comprises 515 residues: G-protein coupled receptor 176 (515 aa).

Positions 1–16 (MGHNGSWISPNASEPH) are enriched in polar residues. Positions 1-20 (MGHNGSWISPNASEPHNASG) are disordered. Residues 1–42 (MGHNGSWISPNASEPHNASGAEAAGVNRSALGEFGEAQLYRQ) lie on the Extracellular side of the membrane. N-linked (GlcNAc...) asparagine glycosylation is found at asparagine 4, asparagine 11, asparagine 17, and asparagine 27. The helical transmembrane segment at 43 to 63 (FTTTVQVVIFIGSLLGNFMVL) threads the bilayer. The Cytoplasmic segment spans residues 64–82 (WSTCRTTVFKSVTNRFIKN). Residues 83 to 103 (LACSGICASLVCVPFDIILST) traverse the membrane as a helical segment. Over 104–118 (SPHCCWWIYTMLFCK) the chain is Extracellular. The helical transmembrane segment at 119-139 (VVKFLHKVFCSVTILSFPAIA) threads the bilayer. The Cytoplasmic segment spans residues 140–160 (LDRYYSVLYPLERKISDAKSR). Residues 161-181 (ELVMYIWAHAVVASVPVFAVT) form a helical membrane-spanning segment. The Extracellular segment spans residues 182–207 (NVADIYATSTCTEVWSNSLGHLVYVL). Residues 208–228 (VYNITTVIVPVVVVFLFLILI) traverse the membrane as a helical segment. Residues 229-267 (RRALSASQKKKVIIAALRTPQNTISIPYASQREAELHAT) are Cytoplasmic-facing. A helical transmembrane segment spans residues 268–288 (LLSMVMVFILCSVPYATLVVY). The Extracellular portion of the chain corresponds to 289–299 (QTVLNVPDTSV). A helical membrane pass occupies residues 300-320 (FLLLTAVWLPKVSLLANPVLF). Residues 321-515 (LTVNKSVRKC…KVSIFPKVDS (195 aa)) lie on the Cytoplasmic side of the membrane.

Belongs to the G-protein coupled receptor 1 family.

The protein resides in the cell membrane. In terms of biological role, orphan receptor involved in normal circadian rhythm behavior. Acts through the G-protein subclass G(z)-alpha and has an agonist-independent basal activity to repress cAMP production. The sequence is that of G-protein coupled receptor 176 (GPR176) from Homo sapiens (Human).